A 117-amino-acid chain; its full sequence is Large ribosomal subunit protein bL20 (117 aa).

This sequence belongs to the bacterial ribosomal protein bL20 family.

Functionally, binds directly to 23S ribosomal RNA and is necessary for the in vitro assembly process of the 50S ribosomal subunit. It is not involved in the protein synthesizing functions of that subunit. In Pelobacter propionicus (strain DSM 2379 / NBRC 103807 / OttBd1), this protein is Large ribosomal subunit protein bL20.